The sequence spans 261 residues: Taurine import ATP-binding protein TauB (261 aa).

An ABC transporter domain is found at 4–233 (LTADRVSVRY…RWRAGDSARA (230 aa)). Position 38–45 (38–45 (GPSGCGKT)) interacts with ATP.

It belongs to the ABC transporter superfamily. Taurine importer (TC 3.A.1.17.1) family. In terms of assembly, the complex is composed of two ATP-binding proteins (TauB), two transmembrane proteins (TauC) and a solute-binding protein (TauA).

The protein resides in the cell inner membrane. It carries out the reaction taurine(out) + ATP + H2O = taurine(in) + ADP + phosphate + H(+). Functionally, part of the ABC transporter complex TauABC involved in taurine import. Responsible for energy coupling to the transport system. This is Taurine import ATP-binding protein TauB from Chromobacterium violaceum (strain ATCC 12472 / DSM 30191 / JCM 1249 / CCUG 213 / NBRC 12614 / NCIMB 9131 / NCTC 9757 / MK).